We begin with the raw amino-acid sequence, 198 residues long: Recombination protein RecR (198 aa).

Residues 58 to 73 (CSVCGNFTDTDPCAIC) form a C4-type zinc finger. One can recognise a Toprim domain in the interval 81–175 (DIICVVEQPK…KVTRIAAGIP (95 aa)).

This sequence belongs to the RecR family.

In terms of biological role, may play a role in DNA repair. It seems to be involved in an RecBC-independent recombinational process of DNA repair. It may act with RecF and RecO. This Clostridium perfringens (strain ATCC 13124 / DSM 756 / JCM 1290 / NCIMB 6125 / NCTC 8237 / Type A) protein is Recombination protein RecR.